Consider the following 130-residue polypeptide: Small ribosomal subunit protein uS11 (130 aa).

The span at 1-15 (MARPTKKSGPRKQKR) shows a compositional bias: basic residues. The interval 1-21 (MARPTKKSGPRKQKRNVPSGV) is disordered.

This sequence belongs to the universal ribosomal protein uS11 family. As to quaternary structure, part of the 30S ribosomal subunit. Interacts with proteins S7 and S18. Binds to IF-3.

Functionally, located on the platform of the 30S subunit, it bridges several disparate RNA helices of the 16S rRNA. Forms part of the Shine-Dalgarno cleft in the 70S ribosome. In Synechococcus elongatus (strain ATCC 33912 / PCC 7942 / FACHB-805) (Anacystis nidulans R2), this protein is Small ribosomal subunit protein uS11.